A 220-amino-acid chain; its full sequence is MTLQISAQNVKALRDKTGAGMMDCKKALEASNGNEEKALDSLRQKGLASANKKSGRTAIEGLLESYIHTGGRIGVLVEVNCETDFVARRPEFQKLAKDIAMQIAACPNVEYVSMMHISDETISLEKRIEAGRDDIKDKPAEMIEKIVEGRIKKRLKELSLLDQMFIRNQDITIEDLINQNIALLGENIKIRRFVRFILGGGEENTKANFADEVADILNKK.

This sequence belongs to the EF-Ts family.

It localises to the plastid. The protein localises to the chloroplast. Functionally, associates with the EF-Tu.GDP complex and induces the exchange of GDP to GTP. It remains bound to the aminoacyl-tRNA.EF-Tu.GTP complex up to the GTP hydrolysis stage on the ribosome. The polypeptide is Elongation factor Ts, chloroplastic (tsf) (Porphyra purpurea (Red seaweed)).